The sequence spans 183 residues: Glutathione-regulated potassium-efflux system ancillary protein KefG (183 aa).

This sequence belongs to the NAD(P)H dehydrogenase (quinone) family. KefG subfamily. Interacts with KefB.

It localises to the cell inner membrane. It carries out the reaction a quinone + NADH + H(+) = a quinol + NAD(+). It catalyses the reaction a quinone + NADPH + H(+) = a quinol + NADP(+). In terms of biological role, regulatory subunit of a potassium efflux system that confers protection against electrophiles. Required for full activity of KefB. The protein is Glutathione-regulated potassium-efflux system ancillary protein KefG of Pectobacterium carotovorum subsp. carotovorum (strain PC1).